A 632-amino-acid chain; its full sequence is tRNA uridine 5-carboxymethylaminomethyl modification enzyme MnmG (632 aa).

FAD is bound by residues 13–18, Val125, and Ser180; that span reads GGGHAG. 273–287 contacts NAD(+); that stretch reads GPRYCPSIEDKVMRF. Gln370 is an FAD binding site.

It belongs to the MnmG family. Homodimer. Heterotetramer of two MnmE and two MnmG subunits. It depends on FAD as a cofactor.

It is found in the cytoplasm. Its function is as follows. NAD-binding protein involved in the addition of a carboxymethylaminomethyl (cmnm) group at the wobble position (U34) of certain tRNAs, forming tRNA-cmnm(5)s(2)U34. In Vibrio vulnificus (strain YJ016), this protein is tRNA uridine 5-carboxymethylaminomethyl modification enzyme MnmG.